We begin with the raw amino-acid sequence, 271 residues long: Putative two-component membrane permease complex subunit SMU_746c (271 aa).

2 consecutive transmembrane segments (helical) span residues Leu34–Met54 and Phe70–Pro90.

It belongs to the UPF0703 family. As to quaternary structure, interacts with SMU_747c.

It localises to the cell membrane. Its function is as follows. Could be part of a two-component membrane permease system responsible for amino acid transport under low pH. Involved in acidogenesis, biofilm formation and low-pH survival. This is Putative two-component membrane permease complex subunit SMU_746c from Streptococcus mutans serotype c (strain ATCC 700610 / UA159).